A 383-amino-acid chain; its full sequence is Acetylornithine deacetylase (383 aa).

A Zn(2+)-binding site is contributed by His-80. The active site involves Asp-82. Asp-112 contacts Zn(2+). The active site involves Glu-144. Zn(2+) contacts are provided by Glu-145, Glu-169, and His-355.

Belongs to the peptidase M20A family. ArgE subfamily. As to quaternary structure, homodimer. Zn(2+) is required as a cofactor. Co(2+) serves as cofactor. The cofactor is glutathione.

It localises to the cytoplasm. The catalysed reaction is N(2)-acetyl-L-ornithine + H2O = L-ornithine + acetate. The protein operates within amino-acid biosynthesis; L-arginine biosynthesis; L-ornithine from N(2)-acetyl-L-ornithine (linear): step 1/1. Catalyzes the hydrolysis of the amide bond of N(2)-acetylated L-amino acids. Cleaves the acetyl group from N-acetyl-L-ornithine to form L-ornithine, an intermediate in L-arginine biosynthesis pathway, and a branchpoint in the synthesis of polyamines. The chain is Acetylornithine deacetylase from Edwardsiella ictaluri (strain 93-146).